We begin with the raw amino-acid sequence, 300 residues long: Zinc finger protein 705B (300 aa).

The 72-residue stretch at 7 to 78 (VTFEDVAIDF…GRVFLQDQNP (72 aa)) folds into the KRAB domain. 3 C2H2-type zinc fingers span residues 172-194 (YQCN…KMTH), 200-222 (YACH…EKTH), and 228-250 (YKCH…ERTH). Residues 256 to 278 (YECDKSGKAFSQSSGFRGNKIIH) form a C2H2-type 4; degenerate zinc finger.

The protein belongs to the krueppel C2H2-type zinc-finger protein family.

It localises to the nucleus. Its function is as follows. May be involved in transcriptional regulation. This is Zinc finger protein 705B (ZNF705B) from Homo sapiens (Human).